The sequence spans 343 residues: Holliday junction branch migration complex subunit RuvB (343 aa).

The disordered stretch occupies residues 1-26 (MKEKILTFSSDPSSPVTRHETEEDTG). The tract at residues 3 to 193 (EKILTFSSDP…FGIFRKFDFY (191 aa)) is large ATPase domain (RuvB-L). Residues 7–16 (TFSSDPSSPV) are compositionally biased toward polar residues. Residues L32, R33, G74, K77, T78, T79, 140–142 (EDF), R183, Y193, and R230 each bind ATP. T78 lines the Mg(2+) pocket. A small ATPAse domain (RuvB-S) region spans residues 194 to 264 (SRQDLARIVS…AIDDALALEG (71 aa)). The tract at residues 267–343 (EKGLTGLDRS…YRHLGVQWRG (77 aa)) is head domain (RuvB-H). The DNA site is built by R322 and R327.

It belongs to the RuvB family. In terms of assembly, homohexamer. Forms an RuvA(8)-RuvB(12)-Holliday junction (HJ) complex. HJ DNA is sandwiched between 2 RuvA tetramers; dsDNA enters through RuvA and exits via RuvB. An RuvB hexamer assembles on each DNA strand where it exits the tetramer. Each RuvB hexamer is contacted by two RuvA subunits (via domain III) on 2 adjacent RuvB subunits; this complex drives branch migration. In the full resolvosome a probable DNA-RuvA(4)-RuvB(12)-RuvC(2) complex forms which resolves the HJ.

It localises to the cytoplasm. It catalyses the reaction ATP + H2O = ADP + phosphate + H(+). The RuvA-RuvB-RuvC complex processes Holliday junction (HJ) DNA during genetic recombination and DNA repair, while the RuvA-RuvB complex plays an important role in the rescue of blocked DNA replication forks via replication fork reversal (RFR). RuvA specifically binds to HJ cruciform DNA, conferring on it an open structure. The RuvB hexamer acts as an ATP-dependent pump, pulling dsDNA into and through the RuvAB complex. RuvB forms 2 homohexamers on either side of HJ DNA bound by 1 or 2 RuvA tetramers; 4 subunits per hexamer contact DNA at a time. Coordinated motions by a converter formed by DNA-disengaged RuvB subunits stimulates ATP hydrolysis and nucleotide exchange. Immobilization of the converter enables RuvB to convert the ATP-contained energy into a lever motion, pulling 2 nucleotides of DNA out of the RuvA tetramer per ATP hydrolyzed, thus driving DNA branch migration. The RuvB motors rotate together with the DNA substrate, which together with the progressing nucleotide cycle form the mechanistic basis for DNA recombination by continuous HJ branch migration. Branch migration allows RuvC to scan DNA until it finds its consensus sequence, where it cleaves and resolves cruciform DNA. In Desulfosudis oleivorans (strain DSM 6200 / JCM 39069 / Hxd3) (Desulfococcus oleovorans), this protein is Holliday junction branch migration complex subunit RuvB.